We begin with the raw amino-acid sequence, 176 residues long: RNA pyrophosphohydrolase (176 aa).

In terms of domain architecture, Nudix hydrolase spans 6 to 149 (GYRPNVGIVI…KRDVYRRVMK (144 aa)). A Nudix box motif is present at residues 38-59 (GGINPGESAEQAMYRELFEEVG).

Belongs to the Nudix hydrolase family. RppH subfamily. The cofactor is a divalent metal cation.

In terms of biological role, accelerates the degradation of transcripts by removing pyrophosphate from the 5'-end of triphosphorylated RNA, leading to a more labile monophosphorylated state that can stimulate subsequent ribonuclease cleavage. This Shigella dysenteriae serotype 1 (strain Sd197) protein is RNA pyrophosphohydrolase.